The primary structure comprises 360 residues: Protein Wnt-2 (360 aa).

An N-terminal signal peptide occupies residues 1–25 (MNSPLRGIWLWLPLLLTWLTPEVSS). 11 cysteine pairs are disulfide-bonded: Cys-76-Cys-87, Cys-127-Cys-135, Cys-137-Cys-157, Cys-206-Cys-220, Cys-208-Cys-215, Cys-278-Cys-309, Cys-294-Cys-304, Cys-308-Cys-348, Cys-324-Cys-339, Cys-326-Cys-336, and Cys-331-Cys-332. The O-palmitoleoyl serine; by PORCN moiety is linked to residue Ser-212. A glycan (N-linked (GlcNAc...) asparagine) is linked at Asn-295.

This sequence belongs to the Wnt family. Palmitoleoylation is required for efficient binding to frizzled receptors. Depalmitoleoylation leads to Wnt signaling pathway inhibition.

The protein resides in the secreted. It is found in the extracellular space. The protein localises to the extracellular matrix. Ligand for members of the frizzled family of seven transmembrane receptors. Probable developmental protein. May be a signaling molecule which affects the development of discrete regions of tissues. Is likely to signal over only few cell diameters. This Ateles geoffroyi (Black-handed spider monkey) protein is Protein Wnt-2 (WNT2).